The chain runs to 767 residues: Polyribonucleotide nucleotidyltransferase (767 aa).

Mg(2+) is bound by residues aspartate 488 and aspartate 494. Residues 555–614 (PRLYTMKINPEKIRDVIGKGGSVIRALTEETGCQIDIGEDGTITIASTDADKAELAKKRI) enclose the KH domain. The S1 motif domain occupies 624-692 (GKVYEGPVVK…EKGRIKLSMK (69 aa)). A compositionally biased stretch (basic and acidic residues) spans 700-742 (GMEFEERAPRREGGFGDRGDRGDRGPRRDRGGDRPERGERPAR). Residues 700–767 (GMEFEERAPR…QPQQQQGQQQ (68 aa)) are disordered. The span at 752–767 (GAPAAGQPQQQQGQQQ) shows a compositional bias: low complexity.

This sequence belongs to the polyribonucleotide nucleotidyltransferase family. Requires Mg(2+) as cofactor.

The protein resides in the cytoplasm. The enzyme catalyses RNA(n+1) + phosphate = RNA(n) + a ribonucleoside 5'-diphosphate. Functionally, involved in mRNA degradation. Catalyzes the phosphorolysis of single-stranded polyribonucleotides processively in the 3'- to 5'-direction. The protein is Polyribonucleotide nucleotidyltransferase of Leptothrix cholodnii (strain ATCC 51168 / LMG 8142 / SP-6) (Leptothrix discophora (strain SP-6)).